A 258-amino-acid chain; its full sequence is Pimeloyl-[acyl-carrier protein] methyl ester esterase (258 aa).

Substrate is bound by residues W22, 84–85, and 145–149; these read SL and FLAIQ. S84 (nucleophile) is an active-site residue. Active-site residues include D209 and H238. A substrate-binding site is contributed by H238.

It belongs to the AB hydrolase superfamily. Carboxylesterase BioH family. As to quaternary structure, monomer.

Its subcellular location is the cytoplasm. It carries out the reaction 6-carboxyhexanoyl-[ACP] methyl ester + H2O = 6-carboxyhexanoyl-[ACP] + methanol + H(+). It participates in cofactor biosynthesis; biotin biosynthesis. Functionally, the physiological role of BioH is to remove the methyl group introduced by BioC when the pimeloyl moiety is complete. It allows to synthesize pimeloyl-ACP via the fatty acid synthetic pathway through the hydrolysis of the ester bonds of pimeloyl-ACP esters. The protein is Pimeloyl-[acyl-carrier protein] methyl ester esterase of Pseudoalteromonas atlantica (strain T6c / ATCC BAA-1087).